The chain runs to 457 residues: Solute carrier family 38 member 6 (457 aa).

M1 is subject to N-acetylmethionine. 2 positions are modified to phosphoserine: S4 and S7. The next 5 helical transmembrane spans lie at 48–68, 70–90, 112–132, 171–191, and 192–212; these read FGLSVFNVMNAIMGSGILGLA, VMANTGILGFSFLLLLVALLA, LGLFAFGLPGKVVVAGTIIIQ, LLIIICVGIVFPLSLLPKIGF, and LGYTSSLSFFFMVFFALVVVI. The cysteines at positions 219 and 239 are disulfide-linked. N-linked (GlcNAc...) asparagine glycosylation is present at N234. Residues 251 to 271 traverse the membrane as a helical segment; that stretch reads VYAIPTMAFSFLCHTSVLPIY. The N-linked (GlcNAc...) asparagine glycan is linked to N284. The next 5 helical transmembrane spans lie at 289 to 309, 328 to 348, 372 to 392, 395 to 415, and 432 to 452; these read AIALSFLVYFVSALFGYLTFY, AAVMAVKLCILFAVLLTVPLI, SLTTLALNIIIVLLAIYVPDI, VFGVVGASTSTCLIFVFPGLF, and ALSLLSTGTVVGSFSLVLIIL.

This sequence belongs to the amino acid/polyamine transporter 2 family.

Its subcellular location is the cell membrane. The protein localises to the synapse. It catalyses the reaction L-glutamine(out) = L-glutamine(in). It carries out the reaction L-glutamate(out) = L-glutamate(in). Functionally, amino acid transporter with an apparent selectivity for L-glutamine and L-glutamate. May facilitate glutamine uptake in excitatory neurons. The transport mechanism remains to be elucidated. The chain is Solute carrier family 38 member 6 from Rattus norvegicus (Rat).